The following is a 169-amino-acid chain: MGIVIGKIELNNEKQIIGELKKKIKGVNFHIAQKVIMLSGNVASIKGNKLIQSEEKQIVDILQRFKGLYSHNYGLKEEALAKIRRIENVYRYIRVRQGYPVRGRTKSNANTVKRQRNVSTGVKTKRKKMYLLNGKPTNRKERKIFNKLKKLQEKKNKEQKKSQKCKTKK.

The segment at lysine 149–lysine 169 is disordered. Basic and acidic residues predominate over residues lysine 150–lysine 161.

The protein belongs to the universal ribosomal protein uS13 family. In terms of assembly, part of the small ribosomal subunit.

Its subcellular location is the mitochondrion. In terms of biological role, located at the top of the head of the small subunit, it contacts several helices of the small subunit rRNA. The protein is Small ribosomal subunit protein uS13m (mrps13) of Dictyostelium discoideum (Social amoeba).